Reading from the N-terminus, the 649-residue chain is UvrABC system protein B (649 aa).

In terms of domain architecture, Helicase ATP-binding spans 25 to 178 (EHYKDGIKEQ…EDILKELVKM (154 aa)). 38–45 (GVTGSGKT) serves as a coordination point for ATP. A Beta-hairpin motif is present at residues 91–114 (YYDYYQPEAYVAQTDTFIDKESAI). Residues 428–594 (QVDDLLGEIR…SVVRKLKDKK (167 aa)) enclose the Helicase C-terminal domain. The UVR domain maps to 614–649 (DEIIKELEKEMKQAAKDLNFEKAAKLRDRIMELKEE).

It belongs to the UvrB family. Forms a heterotetramer with UvrA during the search for lesions. Interacts with UvrC in an incision complex.

The protein localises to the cytoplasm. Its function is as follows. The UvrABC repair system catalyzes the recognition and processing of DNA lesions. A damage recognition complex composed of 2 UvrA and 2 UvrB subunits scans DNA for abnormalities. Upon binding of the UvrA(2)B(2) complex to a putative damaged site, the DNA wraps around one UvrB monomer. DNA wrap is dependent on ATP binding by UvrB and probably causes local melting of the DNA helix, facilitating insertion of UvrB beta-hairpin between the DNA strands. Then UvrB probes one DNA strand for the presence of a lesion. If a lesion is found the UvrA subunits dissociate and the UvrB-DNA preincision complex is formed. This complex is subsequently bound by UvrC and the second UvrB is released. If no lesion is found, the DNA wraps around the other UvrB subunit that will check the other stand for damage. The polypeptide is UvrABC system protein B (Methanosphaera stadtmanae (strain ATCC 43021 / DSM 3091 / JCM 11832 / MCB-3)).